We begin with the raw amino-acid sequence, 367 residues long: 2-aminoethylphosphonate--pyruvate transaminase (367 aa).

N6-(pyridoxal phosphate)lysine is present on K193.

The protein belongs to the class-V pyridoxal-phosphate-dependent aminotransferase family. PhnW subfamily. Homodimer. Pyridoxal 5'-phosphate serves as cofactor.

The enzyme catalyses (2-aminoethyl)phosphonate + pyruvate = phosphonoacetaldehyde + L-alanine. In terms of biological role, involved in phosphonate degradation. This Vibrio vulnificus (strain CMCP6) protein is 2-aminoethylphosphonate--pyruvate transaminase.